A 320-amino-acid polypeptide reads, in one-letter code: 3-oxoacyl-[acyl-carrier-protein] reductase 1, chloroplastic (320 aa).

The transit peptide at 1 to 60 directs the protein to the chloroplast; it reads MATTVAATKLTSLKAVKKLGFREIRQVRQWSPLQSAMPHFGMLRCGSRQSFATSTVVKAQ. Residue 82 to 106 coordinates NADP(+); sequence VTGASRGIGKAIALSLGKAGCKVLV. Ser-214 is a binding site for substrate. Tyr-227 serves as the catalytic Proton acceptor.

Belongs to the short-chain dehydrogenases/reductases (SDR) family. In terms of assembly, homotetramer.

It localises to the plastid. The protein resides in the chloroplast. It catalyses the reaction a (3R)-hydroxyacyl-[ACP] + NADP(+) = a 3-oxoacyl-[ACP] + NADPH + H(+). It participates in lipid metabolism; fatty acid biosynthesis. In Brassica napus (Rape), this protein is 3-oxoacyl-[acyl-carrier-protein] reductase 1, chloroplastic (gbkr1).